The sequence spans 202 residues: Holliday junction branch migration complex subunit RuvA (202 aa).

Residues 1 to 65 (MIAYVEGRLA…EDALELYGFA (65 aa)) are domain I. The tract at residues 66–144 (TWDERQTFIV…VEDLPAAAPL (79 aa)) is domain II. The interval 145 to 155 (VTGGAPGGVFR) is flexible linker. Residues 155–202 (RDALAGLANLGYGEEEASHVLKDVLHGEPDLDVGGALRAALRALARGR) are domain III.

The protein belongs to the RuvA family. In terms of assembly, homotetramer. Forms an RuvA(8)-RuvB(12)-Holliday junction (HJ) complex. HJ DNA is sandwiched between 2 RuvA tetramers; dsDNA enters through RuvA and exits via RuvB. An RuvB hexamer assembles on each DNA strand where it exits the tetramer. Each RuvB hexamer is contacted by two RuvA subunits (via domain III) on 2 adjacent RuvB subunits; this complex drives branch migration. In the full resolvosome a probable DNA-RuvA(4)-RuvB(12)-RuvC(2) complex forms which resolves the HJ.

It is found in the cytoplasm. Its function is as follows. The RuvA-RuvB-RuvC complex processes Holliday junction (HJ) DNA during genetic recombination and DNA repair, while the RuvA-RuvB complex plays an important role in the rescue of blocked DNA replication forks via replication fork reversal (RFR). RuvA specifically binds to HJ cruciform DNA, conferring on it an open structure. The RuvB hexamer acts as an ATP-dependent pump, pulling dsDNA into and through the RuvAB complex. HJ branch migration allows RuvC to scan DNA until it finds its consensus sequence, where it cleaves and resolves the cruciform DNA. This Nitratidesulfovibrio vulgaris (strain ATCC 29579 / DSM 644 / CCUG 34227 / NCIMB 8303 / VKM B-1760 / Hildenborough) (Desulfovibrio vulgaris) protein is Holliday junction branch migration complex subunit RuvA.